Reading from the N-terminus, the 1332-residue chain is DNA-directed RNA polymerase subunit beta'' (1332 aa).

Zn(2+)-binding residues include C220, C291, C298, and C301.

This sequence belongs to the RNA polymerase beta' chain family. RpoC2 subfamily. In plastids the minimal PEP RNA polymerase catalytic core is composed of four subunits: alpha, beta, beta', and beta''. When a (nuclear-encoded) sigma factor is associated with the core the holoenzyme is formed, which can initiate transcription. It depends on Zn(2+) as a cofactor.

The protein resides in the plastid. Its subcellular location is the chloroplast. The catalysed reaction is RNA(n) + a ribonucleoside 5'-triphosphate = RNA(n+1) + diphosphate. In terms of biological role, DNA-dependent RNA polymerase catalyzes the transcription of DNA into RNA using the four ribonucleoside triphosphates as substrates. This is DNA-directed RNA polymerase subunit beta'' from Lotus japonicus (Lotus corniculatus var. japonicus).